Consider the following 190-residue polypeptide: uncharacterized protein (190 aa).

The protein to Synechocystis PCC 6803 sll1609 and slr1290.

This is an uncharacterized protein from Synechocystis sp. (strain ATCC 27184 / PCC 6803 / Kazusa).